A 469-amino-acid chain; its full sequence is Sorting and assembly machinery component 50 homolog (469 aa).

The region spanning 45-125 (VVVQHVHFDG…LDVTFEVTEL (81 aa)) is the POTRA domain. Lys-255 is subject to N6-methyllysine.

It belongs to the SAM50/omp85 family. Associates with the mitochondrial contact site and cristae organizing system (MICOS) complex, composed of at least MICOS10/MIC10, CHCHD3/MIC19, CHCHD6/MIC25, APOOL/MIC27, IMMT/MIC60, APOO/MIC23/MIC26 and QIL1/MIC13. This complex was also known under the names MINOS or MitOS complex. The MICOS complex associates with mitochondrial outer membrane proteins SAMM50, MTX1 and MTX2 (together described as components of the mitochondrial outer membrane sorting assembly machinery (SAM) complex) and DNAJC11, mitochondrial inner membrane protein TMEM11 and with HSPA9. The MICOS and SAM complexes together with DNAJC11 are part of a large protein complex spanning both membranes termed the mitochondrial intermembrane space bridging (MIB) complex. Interacts with IMMT/MIC60. Interacts with CHCHD3/MIC19. Interacts with ARMC1. As to quaternary structure, (Microbial infection) Interacts with parasite T.gondii RH strain MAF1b1; the interaction is probably indirect and results in the disruption of the MIB complex and the formation of SPOTs (structures positive for outer mitochondrial membrane (OMM)), a cellular response to OMM stress, which leads to the constitutive shedding of OMM vesicles.

The protein resides in the mitochondrion outer membrane. It localises to the cytoplasm. The protein localises to the mitochondrion. In terms of biological role, plays a crucial role in the maintenance of the structure of mitochondrial cristae and the proper assembly of the mitochondrial respiratory chain complexes. Required for the assembly of TOMM40 into the TOM complex. This chain is Sorting and assembly machinery component 50 homolog (Samm50), found in Mus musculus (Mouse).